Here is a 118-residue protein sequence, read N- to C-terminus: Small ribosomal subunit protein uS13 (118 aa).

Positions 93–118 (RSLPVRGQRSKTNARTRKGPRKPIKK) are disordered.

This sequence belongs to the universal ribosomal protein uS13 family. Part of the 30S ribosomal subunit. Forms a loose heterodimer with protein S19. Forms two bridges to the 50S subunit in the 70S ribosome.

In terms of biological role, located at the top of the head of the 30S subunit, it contacts several helices of the 16S rRNA. In the 70S ribosome it contacts the 23S rRNA (bridge B1a) and protein L5 of the 50S subunit (bridge B1b), connecting the 2 subunits; these bridges are implicated in subunit movement. Contacts the tRNAs in the A and P-sites. The sequence is that of Small ribosomal subunit protein uS13 from Teredinibacter turnerae (strain ATCC 39867 / T7901).